The chain runs to 391 residues: 8-amino-7-oxononanoate synthase (391 aa).

Arg20 lines the substrate pocket. 106–107 (GY) is a binding site for pyridoxal 5'-phosphate. His131 is a binding site for substrate. Positions 178, 206, and 234 each coordinate pyridoxal 5'-phosphate. Lys237 is subject to N6-(pyridoxal phosphate)lysine. Substrate is bound at residue Thr353.

It belongs to the class-II pyridoxal-phosphate-dependent aminotransferase family. BioF subfamily. As to quaternary structure, homodimer. Pyridoxal 5'-phosphate serves as cofactor.

It carries out the reaction 6-carboxyhexanoyl-[ACP] + L-alanine + H(+) = (8S)-8-amino-7-oxononanoate + holo-[ACP] + CO2. It participates in cofactor biosynthesis; biotin biosynthesis. In terms of biological role, catalyzes the decarboxylative condensation of pimeloyl-[acyl-carrier protein] and L-alanine to produce 8-amino-7-oxononanoate (AON), [acyl-carrier protein], and carbon dioxide. The chain is 8-amino-7-oxononanoate synthase from Trichlorobacter lovleyi (strain ATCC BAA-1151 / DSM 17278 / SZ) (Geobacter lovleyi).